A 1534-amino-acid chain; its full sequence is Alpha-2-macroglobulin homolog (1534 aa).

An N-terminal signal peptide occupies residues 1 to 38 (MDTQRFQSQFHWHLSFKFSGAIAACLSLSLVGTGLANA).

The protein belongs to the protease inhibitor I39 (alpha-2-macroglobulin) family. Bacterial alpha-2-macroglobulin subfamily.

The protein is Alpha-2-macroglobulin homolog (yfaS) of Escherichia coli O157:H7.